A 211-amino-acid chain; its full sequence is Imidazole glycerol phosphate synthase subunit HisH (211 aa).

The Glutamine amidotransferase type-1 domain occupies 3 to 211; sequence VVAVIDYEMG…VSQVREKIAA (209 aa). Catalysis depends on Cys81, which acts as the Nucleophile. Residues His186 and Glu188 contribute to the active site.

As to quaternary structure, heterodimer of HisH and HisF.

The protein localises to the cytoplasm. It carries out the reaction 5-[(5-phospho-1-deoxy-D-ribulos-1-ylimino)methylamino]-1-(5-phospho-beta-D-ribosyl)imidazole-4-carboxamide + L-glutamine = D-erythro-1-(imidazol-4-yl)glycerol 3-phosphate + 5-amino-1-(5-phospho-beta-D-ribosyl)imidazole-4-carboxamide + L-glutamate + H(+). The catalysed reaction is L-glutamine + H2O = L-glutamate + NH4(+). It functions in the pathway amino-acid biosynthesis; L-histidine biosynthesis; L-histidine from 5-phospho-alpha-D-ribose 1-diphosphate: step 5/9. IGPS catalyzes the conversion of PRFAR and glutamine to IGP, AICAR and glutamate. The HisH subunit catalyzes the hydrolysis of glutamine to glutamate and ammonia as part of the synthesis of IGP and AICAR. The resulting ammonia molecule is channeled to the active site of HisF. The sequence is that of Imidazole glycerol phosphate synthase subunit HisH from Trichormus variabilis (strain ATCC 29413 / PCC 7937) (Anabaena variabilis).